Here is a 357-residue protein sequence, read N- to C-terminus: Quinolinate synthase (357 aa).

Residues histidine 50 and serine 71 each contribute to the iminosuccinate site. Cysteine 116 contributes to the [4Fe-4S] cluster binding site. Iminosuccinate-binding positions include tyrosine 142–asparagine 144 and serine 159. Cysteine 203 is a [4Fe-4S] cluster binding site. Iminosuccinate contacts are provided by residues histidine 229 to glutamate 231 and threonine 246. Cysteine 300 contributes to the [4Fe-4S] cluster binding site.

This sequence belongs to the quinolinate synthase family. Type 1 subfamily. Requires [4Fe-4S] cluster as cofactor.

It localises to the cytoplasm. The enzyme catalyses iminosuccinate + dihydroxyacetone phosphate = quinolinate + phosphate + 2 H2O + H(+). The protein operates within cofactor biosynthesis; NAD(+) biosynthesis; quinolinate from iminoaspartate: step 1/1. In terms of biological role, catalyzes the condensation of iminoaspartate with dihydroxyacetone phosphate to form quinolinate. This chain is Quinolinate synthase, found in Shewanella oneidensis (strain ATCC 700550 / JCM 31522 / CIP 106686 / LMG 19005 / NCIMB 14063 / MR-1).